Consider the following 908-residue polypeptide: Mechanosensitive ion channel protein 8 (908 aa).

Residues 1 to 25 (MDFRNSFKSHSSYKQIRSPGDQSEP) show a composition bias toward polar residues. 4 disordered regions span residues 1–88 (MDFR…HTAV), 148–172 (DQEN…SFDA), 190–221 (VAGS…LQEE), and 242–265 (VKTR…WRSG). Positions 31–70 (PILHDHHPDHSGMVVDDQKPDSTRSSLDDGRNAPVERDAS) are enriched in basic and acidic residues. Composition is skewed to polar residues over residues 75–85 (QDNTTGTSTDH) and 156–171 (HQTM…TSFD). Positions 196–206 (SSSSHSSSSSS) are enriched in low complexity. The segment covering 207–218 (ATMRTNQDQPQL) has biased composition (polar residues). Residues 247 to 256 (RLQDPPREEE) show a composition bias toward basic and acidic residues. Helical transmembrane passes span 298–318 (AITL…ACSL), 341–361 (LVLI…VFFI), 381–401 (AVQN…LFDK), 411–431 (FLPY…LWLI), 673–693 (MINI…LEIA), and 709–729 (AFIF…LFIV).

It belongs to the MscS (TC 1.A.23) family. In terms of tissue distribution, expressed in tricellular and mature pollen, and in germinating tube. Not detected in leaves or roots.

The protein localises to the cell membrane. It is found in the endomembrane system. Not regulated by MgCl(2), ruthenium red or tetramethylammonium-Cl. Mechanosensitive channel that opens in response to stretch forces in the membrane lipid bilayer. Exhibits a 6.3-fold preference for chloride over sodium. Regulates osmotic forces during pollen hydration and germination. This Arabidopsis thaliana (Mouse-ear cress) protein is Mechanosensitive ion channel protein 8.